The following is a 412-amino-acid chain: Autophagy-related protein 34 (412 aa).

The segment at 246-348 (NDPLLHVEVS…SNEITLKSPL (103 aa)) is AMS1-binding.

As to quaternary structure, interacts with AMS1, ATG8 and ATG11.

It is found in the preautophagosomal structure membrane. Functionally, cargo-receptor protein involved in the cytoplasm to vacuole transport (Cvt) and in autophagy. Recognizes cargo proteins, such as AMS1 and delivers them to the pre-autophagosomal structure for eventual engulfment by the autophagosome and targeting to the vacuole. The sequence is that of Autophagy-related protein 34 (ATG34) from Saccharomyces cerevisiae (strain ATCC 204508 / S288c) (Baker's yeast).